Consider the following 224-residue polypeptide: NADH-quinone oxidoreductase subunit B (224 aa).

[4Fe-4S] cluster contacts are provided by cysteine 67, cysteine 68, cysteine 133, and cysteine 162. The interval 200 to 224 is disordered; that stretch reads DMPAEKDRKRGERIKVTNLRTPDEI. Residues 201 to 224 show a composition bias toward basic and acidic residues; the sequence is MPAEKDRKRGERIKVTNLRTPDEI.

It belongs to the complex I 20 kDa subunit family. In terms of assembly, NDH-1 is composed of 14 different subunits. Subunits NuoB, C, D, E, F, and G constitute the peripheral sector of the complex. [4Fe-4S] cluster serves as cofactor.

Its subcellular location is the cell inner membrane. It catalyses the reaction a quinone + NADH + 5 H(+)(in) = a quinol + NAD(+) + 4 H(+)(out). Functionally, NDH-1 shuttles electrons from NADH, via FMN and iron-sulfur (Fe-S) centers, to quinones in the respiratory chain. The immediate electron acceptor for the enzyme in this species is believed to be ubiquinone. Couples the redox reaction to proton translocation (for every two electrons transferred, four hydrogen ions are translocated across the cytoplasmic membrane), and thus conserves the redox energy in a proton gradient. This chain is NADH-quinone oxidoreductase subunit B, found in Aeromonas salmonicida (strain A449).